The following is a 126-amino-acid chain: Large ribosomal subunit protein bL12 (126 aa).

Belongs to the bacterial ribosomal protein bL12 family. Homodimer. Part of the ribosomal stalk of the 50S ribosomal subunit. Forms a multimeric L10(L12)X complex, where L10 forms an elongated spine to which 2 to 4 L12 dimers bind in a sequential fashion. Binds GTP-bound translation factors.

In terms of biological role, forms part of the ribosomal stalk which helps the ribosome interact with GTP-bound translation factors. Is thus essential for accurate translation. The chain is Large ribosomal subunit protein bL12 from Streptococcus pyogenes serotype M28 (strain MGAS6180).